The sequence spans 259 residues: Bisphosphoglycerate mutase (259 aa).

The residue at position 2 (serine 2) is an N-acetylserine. N-linked (Glc) (glycation) lysine; in vitro glycosylation is found at lysine 3 and lysine 5. 10 to 17 serves as a coordination point for substrate; it reads RHGEGAWN. Histidine 11 serves as the catalytic Tele-phosphohistidine intermediate. N-linked (Glc) (glycation) lysine; in vitro glycosylation occurs at lysine 18. 23 to 24 serves as a coordination point for substrate; sequence CS. Residue lysine 43 is glycosylated (N-linked (Glc) (glycation) lysine; in vitro). Substrate is bound by residues arginine 62, 89-92, arginine 100, and 116-117; these read ERHY and RR. Glutamate 89 functions as the Proton donor/acceptor in the catalytic mechanism. Threonine 122 is subject to Phosphothreonine. An N-linked (Glc) (glycation) lysine glycan is attached at lysine 159. A substrate-binding site is contributed by 189–190; it reads GN. The N-linked (Glc) (glycation) lysine; in vitro glycan is linked to lysine 197.

This sequence belongs to the phosphoglycerate mutase family. BPG-dependent PGAM subfamily. Homodimer. In terms of processing, glycation of Lys-159 in diabetic patients inactivates the enzyme. Expressed in red blood cells. Expressed in non-erythroid cells of the placenta; present in the syncytiotrophoblast layer of the placental villi at the feto-maternal interface (at protein level).

It catalyses the reaction (2R)-3-phospho-glyceroyl phosphate = (2R)-2,3-bisphosphoglycerate + H(+). The enzyme catalyses (2R)-2-phosphoglycerate = (2R)-3-phosphoglycerate. At alkaline pH BPGM favors the synthase reaction; however, at lower pH the phosphatase reaction is dominant. Inhibited by citrate. Functionally, plays a major role in regulating hemoglobin oxygen affinity by controlling the levels of its allosteric effector 2,3-bisphosphoglycerate (2,3-BPG). Also exhibits mutase (EC 5.4.2.11) activity. In Homo sapiens (Human), this protein is Bisphosphoglycerate mutase (BPGM).